Consider the following 140-residue polypeptide: Large ribosomal subunit protein uL14 (140 aa).

Ser17 bears the Phosphoserine mark. A Phosphotyrosine modification is found at Tyr38.

The protein belongs to the universal ribosomal protein uL14 family. As to quaternary structure, component of the large ribosomal subunit.

It is found in the cytoplasm. In terms of biological role, component of the large ribosomal subunit. The ribosome is a large ribonucleoprotein complex responsible for the synthesis of proteins in the cell. The protein is Large ribosomal subunit protein uL14 (RPL23) of Canis lupus familiaris (Dog).